Reading from the N-terminus, the 575-residue chain is Amyloid-beta A4 precursor protein-binding family A member 3 (575 aa).

At methionine 1 the chain carries N-acetylmethionine. The span at 1–10 shows a compositional bias: polar residues; that stretch reads MDFPTISRSP. Disordered regions lie at residues 1–50 and 118–211; these read MDFP…LSRM and CEEC…GPCD. Position 11 is a phosphoserine (serine 11). The span at 143–153 shows a compositional bias: acidic residues; that stretch reads EDPDEDSDSPE. Over residues 156–184 the composition is skewed to low complexity; it reads EGASAEQEGSRSSSSSPEPWLETVPLVTP. The residue at position 171 (serine 171) is a Phosphoserine. Residues 215–364 are required for interaction with NECAB3; it reads LLDGVIFGAR…QFLRESGIDP (150 aa). The PID domain maps to 217 to 381; that stretch reads DGVIFGARYL…SPGACHLHNG (165 aa). Serine 372 carries the phosphoserine modification. PDZ domains are found at residues 394-480 and 485-560; these read EVHL…IVHC and TAII…TMPA.

In terms of assembly, binds to the cytoplasmic domain of amyloid protein (APP) in vivo. Interacts with HIF1AN (via N-terminus). Interacts with NECAB3; seems to mediate the interaction between NECAB3 and HIF1AN. In terms of tissue distribution, expressed in all tissues examined with lower levels in brain and testis.

It is found in the cytoplasm. The protein resides in the perinuclear region. Its function is as follows. May modulate processing of the amyloid-beta precursor protein (APP) and hence formation of APP-beta. May enhance the activity of HIF1A in macrophages by inhibiting the activity of HIF1AN. The sequence is that of Amyloid-beta A4 precursor protein-binding family A member 3 (APBA3) from Homo sapiens (Human).